The chain runs to 301 residues: Methionyl-tRNA formyltransferase (301 aa).

110–113 (SLLP) contacts (6S)-5,6,7,8-tetrahydrofolate.

The protein belongs to the Fmt family.

It carries out the reaction L-methionyl-tRNA(fMet) + (6R)-10-formyltetrahydrofolate = N-formyl-L-methionyl-tRNA(fMet) + (6S)-5,6,7,8-tetrahydrofolate + H(+). Functionally, attaches a formyl group to the free amino group of methionyl-tRNA(fMet). The formyl group appears to play a dual role in the initiator identity of N-formylmethionyl-tRNA by promoting its recognition by IF2 and preventing the misappropriation of this tRNA by the elongation apparatus. This is Methionyl-tRNA formyltransferase from Acidiphilium cryptum (strain JF-5).